Consider the following 174-residue polypeptide: FMN reductase (NADH) RutF (174 aa).

This sequence belongs to the non-flavoprotein flavin reductase family. RutF subfamily.

It carries out the reaction FMNH2 + NAD(+) = FMN + NADH + 2 H(+). Its function is as follows. Catalyzes the reduction of FMN to FMNH2 which is used to reduce pyrimidine by RutA via the Rut pathway. The protein is FMN reductase (NADH) RutF of Agrobacterium fabrum (strain C58 / ATCC 33970) (Agrobacterium tumefaciens (strain C58)).